Consider the following 561-residue polypeptide: MNSNTPTDIVSFCFETQADHNATGPILIDGLTPTRSLTLHQFRQLVCQLIAGLHEQKIQQGQCILVHLENSILYPALFLAIVGVGAVYMGAHPASSATELEHLLSLANPSLIITGRDTLSTVLQCTMSPSGGKKEKIPSDRVWVLNDIDQVLCEAFSSTPDASMGDAAYHHRRDITKLLHSGQRPWRTFDDDGQKSKITPAAMFATSGTSGLPKAAILSHHALIQQHISIHHPVPYPVTRLLTLPLFHRYGALVALFFPTRYAQPLILLPGFQLRPFLSAIHVHGVTETYLSPAMVHILIQSTPQSSSIRESLRSLRYVCVGGAPIDSRPLQSLQDMLHPEACVAQAWGMTETATVFQDRYCLPSRQFDKGSVGVVLPGYQVRLVDVSGSGRVLDNATEIPGELQVRGSGLFTSYKGHPDHTDGDGWFSTGDVMYQKNGHYFLVGRMKEMIKVRGYQVSPVELEAELAQHPLVKDAAVIGVLATDGSSELPRAYVVPLSWAERPSPEDIYDFMRQRLAGYKFLEGGVVFVDSIPRNSGGKIRRTKLSELDDQRDKLIALLT.

An N-linked (GlcNAc...) asparagine glycan is attached at Asn-21. The helical transmembrane segment at 71–91 (SILYPALFLAIVGVGAVYMGA) threads the bilayer. 203–214 (MFATSGTSGLPK) serves as a coordination point for AMP. N-linked (GlcNAc...) asparagine glycosylation is present at Asn-396. Positions 462–540 (ELEAELAQHP…DSIPRNSGGK (79 aa)) are AMP-binding.

This sequence belongs to the ATP-dependent AMP-binding enzyme family.

It is found in the membrane. It carries out the reaction acetate + ATP + CoA = acetyl-CoA + ADP + phosphate. It catalyses the reaction propanoate + ATP + CoA = propanoyl-CoA + AMP + diphosphate. The protein operates within secondary metabolite biosynthesis. Acyl-CoA ligase; part of the gene cluster that mediates the biosynthesis of 2,4'-dihydroxy-3'-methoxypropiophenone. The first step of the pathway is the conversion of acetate into acetyl-CoA by the acyl-CoA ligase ppsA. Acetyl-CoA is then used as a starter unit by the polyketide synthase ppsB and condensed with 4 malonyl-CoA unit to produce the pentaketide backbone. During polyketide extension, the polykedite chain is probably reduced and dehydrated by the KR and PT domains, respectively. O-methylation seems to be catalyzed by an unknown methyltransferase rather than by the CMeT domain of ppsB. Two hydroxylations and one further decarboxylation step catalyzed by yet unknown enzymes are then required to yield 4'-hydroxy-3'-methoxypropiophenone. PpsC functions as a carrier protein to transport 4'-hydroxy-3'-methoxypropiophenone to a specific cell compartment in which 4'-hydroxy-3'-methoxypropiophenone is hydroxylated to 2,4'-dihydroxy-3'-methoxypropiophenone by a still to be identified enzyme. The polypeptide is Acyl-CoA ligase ppsA (Aspergillus oryzae (strain ATCC 42149 / RIB 40) (Yellow koji mold)).